The sequence spans 322 residues: uncharacterized protein (322 aa).

Residues 1 to 13 (MTNADEQNMGQQE) are compositionally biased toward polar residues. Disordered stretches follow at residues 1–94 (MTNA…EEYE) and 125–322 (RREM…TDEE). Low complexity predominate over residues 14 to 31 (GTDTATTAQDTNTQTVGT). Positions 32-50 (QSENTQNTQQASDAQTEQT) are enriched in polar residues. The segment covering 64–75 (EVDEDDVLDAQE) has biased composition (acidic residues). Basic and acidic residues-rich tracts occupy residues 141-227 (GGDR…RGGD), 235-269 (RPRE…RGGD), 277-295 (RPRE…RTDD), and 308-322 (ARAD…TDEE).

This is an uncharacterized protein from Deinococcus radiodurans (strain ATCC 13939 / DSM 20539 / JCM 16871 / CCUG 27074 / LMG 4051 / NBRC 15346 / NCIMB 9279 / VKM B-1422 / R1).